A 304-amino-acid chain; its full sequence is Aspartate carbamoyltransferase catalytic subunit (304 aa).

Residues Arg55 and Thr56 each coordinate carbamoyl phosphate. An L-aspartate-binding site is contributed by Lys84. Arg105, His133, and Gln136 together coordinate carbamoyl phosphate. L-aspartate is bound by residues Arg165 and Arg226. Residues Leu265 and Pro266 each coordinate carbamoyl phosphate.

The protein belongs to the aspartate/ornithine carbamoyltransferase superfamily. ATCase family. Heterooligomer of catalytic and regulatory chains.

It carries out the reaction carbamoyl phosphate + L-aspartate = N-carbamoyl-L-aspartate + phosphate + H(+). The protein operates within pyrimidine metabolism; UMP biosynthesis via de novo pathway; (S)-dihydroorotate from bicarbonate: step 2/3. Catalyzes the condensation of carbamoyl phosphate and aspartate to form carbamoyl aspartate and inorganic phosphate, the committed step in the de novo pyrimidine nucleotide biosynthesis pathway. This Methanothrix thermoacetophila (strain DSM 6194 / JCM 14653 / NBRC 101360 / PT) (Methanosaeta thermophila) protein is Aspartate carbamoyltransferase catalytic subunit.